We begin with the raw amino-acid sequence, 65 residues long: Small ribosomal subunit protein bS21 (65 aa).

This sequence belongs to the bacterial ribosomal protein bS21 family.

In Acidobacterium capsulatum (strain ATCC 51196 / DSM 11244 / BCRC 80197 / JCM 7670 / NBRC 15755 / NCIMB 13165 / 161), this protein is Small ribosomal subunit protein bS21.